The chain runs to 504 residues: MANAPFPKLSASLDQGRPHRVRFCPSPTGNPHVGLVRTALFNWAFARHHQGTLVFRIEDTDAARDSEESYQQLLDSMRWLGLDWDEGPEIGGPHAPYRQSQRMDLYKDVAEKLLAAGYAYPCYCTTEELDTRRDAARAAGKPSGYDGHCRDLTAEQKAAYEAEGRTSIVRFRMPDEAITFTDLVRGEITVQPENVPDYGIVRANGAPLYTLVNPVDDALMEITHVLRGEDLLSSTPRQIALYRALIELGIAKDTPAFGHLPYVMGEGNKKLSKRDPQASLNLYRERGFLPEGLLNYLSLLGWSIAEDRDIFSMDELVAAFDIKDVNANPARFDLKKCEHINAEHIRMLDVKTFTEACGPWLKAPFAPWAPEAFDAEKWTRIAPYAQTRVTVLSDITDNVDFLFLDEPVEDEASWTKAMKGDPVALLTTARANLEAADWSDPESLKNAVLTAGEAHGLKLGKAQAPVRVAVTGRTVGLPLFESLEILGRDRSLARVDAALAKLTA.

The short motif at 25-35 is the 'HIGH' region element; the sequence is PSPTGNPHVGL. 4 residues coordinate Zn(2+): Cys-122, Cys-124, Cys-149, and Asp-151. Residues 270-274 carry the 'KMSKS' region motif; sequence KLSKR. Residue Lys-273 participates in ATP binding.

The protein belongs to the class-I aminoacyl-tRNA synthetase family. Glutamate--tRNA ligase type 1 subfamily. In terms of assembly, monomer. Zn(2+) serves as cofactor.

The protein localises to the cytoplasm. It carries out the reaction tRNA(Glu) + L-glutamate + ATP = L-glutamyl-tRNA(Glu) + AMP + diphosphate. Functionally, catalyzes the attachment of glutamate to tRNA(Glu) in a two-step reaction: glutamate is first activated by ATP to form Glu-AMP and then transferred to the acceptor end of tRNA(Glu). In Streptomyces griseus subsp. griseus (strain JCM 4626 / CBS 651.72 / NBRC 13350 / KCC S-0626 / ISP 5235), this protein is Glutamate--tRNA ligase.